Here is a 144-residue protein sequence, read N- to C-terminus: MNGTTQNNAALFDGGVFSPYLTSRLPYWAGVRQNVVGSTVDGRPVAPANSSTLTYATIGPSPLDTAAAAAASAAASTARSMAADFSFYNHLASNAVTRTAVREDILTVMLAKLETLTAQLEELSQKVEELADATTHTPAQPVTQ.

The stretch at 106–133 (LTVMLAKLETLTAQLEELSQKVEELADA) forms a coiled coil.

Belongs to the adenoviridae hexon-interlacing protein family. As to quaternary structure, homotrimer. Interacts with hexon protein; this interaction tethers the hexons together. Self-interacts with adjacent proteins. Interacts with kinesin light chain KLC1; this interaction leads to capsid disruption at the nuclear pore complex during virus entry into host cell.

The protein localises to the virion. It is found in the host nucleus. In terms of biological role, structural component of the virion that acts as a cement protein on the capsid exterior and forms triskelion structures consisting of three molecules that stabilize three hexon trimers at the center of each icosahedral facet and fixes the peripentonal hexons. Dispensable for assembly. During virus entry, recruits the anterograde motor kinesin-1 to the capsid docked at the nuclear pore complex thereby subjecting the docked capsid to a pulling force. The resulting tension leads to capsid disruption, dispersion of capsid fragments toward cell periphery and eventually viral DNA entry into the host nucleus. The sequence is that of Hexon-interlacing protein from Homo sapiens (Human).